Here is a 342-residue protein sequence, read N- to C-terminus: N-acetyl-gamma-glutamyl-phosphate reductase (342 aa).

Residue C146 is part of the active site.

This sequence belongs to the NAGSA dehydrogenase family. Type 1 subfamily.

It localises to the cytoplasm. It catalyses the reaction N-acetyl-L-glutamate 5-semialdehyde + phosphate + NADP(+) = N-acetyl-L-glutamyl 5-phosphate + NADPH + H(+). It functions in the pathway amino-acid biosynthesis; L-arginine biosynthesis; N(2)-acetyl-L-ornithine from L-glutamate: step 3/4. Its function is as follows. Catalyzes the NADPH-dependent reduction of N-acetyl-5-glutamyl phosphate to yield N-acetyl-L-glutamate 5-semialdehyde. The polypeptide is N-acetyl-gamma-glutamyl-phosphate reductase (Thermobifida fusca (strain YX)).